A 375-amino-acid polypeptide reads, in one-letter code: 23S rRNA (uracil(747)-C(5))-methyltransferase RlmC (375 aa).

The [4Fe-4S] cluster site is built by Cys3, Cys11, Cys14, and Cys87. Residues Gln212, Phe241, Glu262, and Asn307 each contribute to the S-adenosyl-L-methionine site. Cys334 serves as the catalytic Nucleophile.

The protein belongs to the class I-like SAM-binding methyltransferase superfamily. RNA M5U methyltransferase family. RlmC subfamily.

It catalyses the reaction uridine(747) in 23S rRNA + S-adenosyl-L-methionine = 5-methyluridine(747) in 23S rRNA + S-adenosyl-L-homocysteine + H(+). Its function is as follows. Catalyzes the formation of 5-methyl-uridine at position 747 (m5U747) in 23S rRNA. The chain is 23S rRNA (uracil(747)-C(5))-methyltransferase RlmC from Cronobacter sakazakii (strain ATCC BAA-894) (Enterobacter sakazakii).